Here is a 618-residue protein sequence, read N- to C-terminus: Glucose starvation modulator protein 1 (618 aa).

Residues 20 to 48 constitute a DNA-binding region (zn(2)-C6 fungal-type); sequence CEFCHTKHIQCDVGRPCQNCLKRNIGKFC. The tract at residues 325 to 353 is disordered; sequence ANANTQPSHNAKLESECDSSSHSDADLEK. The span at 335 to 353 shows a compositional bias: basic and acidic residues; it reads AKLESECDSSSHSDADLEK. The PAS domain maps to 466–538; sequence LLDLENMAKL…QIFNELLAFG (73 aa).

The protein belongs to the ERT1/acuK family.

It localises to the nucleus. In terms of biological role, transcription factor which regulates nonfermentable carbon utilization. Binds specifically to 5'-CGGN(8)CGG-3' and 5'-CGGN(9)CGG-3' sequences in the promoter region. In Saccharomyces cerevisiae (strain JAY291) (Baker's yeast), this protein is Glucose starvation modulator protein 1 (GSM1).